The primary structure comprises 102 residues: Large ribosomal subunit protein bL28 (102 aa).

Residues 1–20 form a disordered region; it reads MSRRCELTAKGPQVGHKVSH.

Belongs to the bacterial ribosomal protein bL28 family.

The polypeptide is Large ribosomal subunit protein bL28 (Bradyrhizobium sp. (strain ORS 278)).